The primary structure comprises 932 residues: MAVVIRLQGLPIVAGTMDIRHFFSGLTIPDGGVHIVGGELGEAFIVFATDEDARLGMMRTGGTIKGSKVTLLLSSKTEMQNMIELSRRRFETANLDIPPANASRSGPPPSSGMSGRVNLPTTVSNFNNPSPSVVTATTSVHESNKNIQTFSTASVGTAPPNMGASFGSPAFSSTVPSTASPMNTVPPPPIPPIPAMPSLPPMPSIPPIPVPPPVPTLPPVPPVPPIPPVPSVPPMTPLPPMSGMPPLNPPPVAPLPAGMNGSGAPMNLNNNLNPMFLGPLNPVNPIQMNSQSSVKPLPINPDDLYVSVHGMPFSAMENDVRDFFHGLRVDAVHLLKDHVGRNNGNGLVKFLSPQDTFEALKRNRMLMIQRYVEVSPATERQWVAAGGHITFKQNMGPSGQTHPPPQTLPRSKSPSGQKRSRSRSPHEAGFCVYLKGLPFEAENKHVIDFFKKLDIVEDSIYIAYGPNGKATGEGFVEFRNEADYKAALCRHKQYMGNRFIQVHPITKKGMLEKIDMIRKRLQNFSYDQREMILNPEGDVNSAKVCAHITNIPFSITKMDVLQFLEGIPVDENAVHVLVDNNGQGLGQALVQFKNEDDARKSERLHRKKLNGREAFVHVVTLEDMREIEKNPPAQGKKGLKMPVPGNPAVPGMPNAGLPGVGLPSAGLPGAGLPSTGLPGSAITSAGLPGAGMPSAGIPSAGGEEHAFLTVGSKEANNGPPFNFPGNFGGSNAFGPPIPPPGLGGGAFGDARPGMPSVGNSGLPGLGLDVPGFGGGPNNLSGPSGFGGGPQNFGNGPGSLGGPPGFGSGPPGLGSAPGHLGGPPAFGPGPGPGPGPGPGPIHIGGPPGFASSSGKPGPTVIKVQNMPFTVSIDEILDFFYGYQVIPGSVCLKYNEKGMPTGEAMVAFESRDEATAAVIDLNDRPIGSRKVNLY.

Residues 97–116 (IPPANASRSGPPPSSGMSGR) form a disordered region. The span at 98–116 (PPANASRSGPPPSSGMSGR) shows a compositional bias: low complexity. In terms of domain architecture, RRM 1 spans 304–379 (LYVSVHGMPF…RYVEVSPATE (76 aa)). 2 positions are modified to phosphoserine: Ser352 and Ser375. Polar residues-rich tracts occupy residues 392–401 (KQNMGPSGQT) and 408–417 (LPRSKSPSGQ). The tract at residues 392–424 (KQNMGPSGQTHPPPQTLPRSKSPSGQKRSRSRS) is disordered. 3 positions are modified to phosphoserine: Ser420, Ser422, and Ser424. The RRM 2 domain occupies 430–507 (FCVYLKGLPF…RFIQVHPITK (78 aa)). A Phosphoserine modification is found at Ser525. Positions 717-734 (NGPPFNFPGNFGGSNAFG) are enriched in low complexity. The disordered stretch occupies residues 717 to 855 (NGPPFNFPGN…PGFASSSGKP (139 aa)). The span at 783-811 (SGFGGGPQNFGNGPGSLGGPPGFGSGPPG) shows a compositional bias: gly residues. Residues 824–838 (AFGPGPGPGPGPGPG) show a composition bias toward pro residues. One can recognise an RRM 3 domain in the interval 856–932 (GPTVIKVQNM…PIGSRKVNLY (77 aa)).

Its subcellular location is the nucleus. The polypeptide is RNA-binding protein 12 (RBM12) (Pongo abelii (Sumatran orangutan)).